A 461-amino-acid polypeptide reads, in one-letter code: Bifunctional protein HldE (461 aa).

The interval 1–311 is ribokinase; that stretch reads MKKILVVGDL…EEIALILNQT (311 aa). Residue 191-194 coordinates ATP; sequence NRAE. The active site involves Asp-260. The interval 332–461 is cytidylyltransferase; that stretch reads FTNGCFDLLH…IEKIKRTHND (130 aa).

In the N-terminal section; belongs to the carbohydrate kinase PfkB family. This sequence in the C-terminal section; belongs to the cytidylyltransferase family. Homodimer.

It carries out the reaction D-glycero-beta-D-manno-heptose 7-phosphate + ATP = D-glycero-beta-D-manno-heptose 1,7-bisphosphate + ADP + H(+). The catalysed reaction is D-glycero-beta-D-manno-heptose 1-phosphate + ATP + H(+) = ADP-D-glycero-beta-D-manno-heptose + diphosphate. The protein operates within nucleotide-sugar biosynthesis; ADP-L-glycero-beta-D-manno-heptose biosynthesis; ADP-L-glycero-beta-D-manno-heptose from D-glycero-beta-D-manno-heptose 7-phosphate: step 1/4. Its pathway is nucleotide-sugar biosynthesis; ADP-L-glycero-beta-D-manno-heptose biosynthesis; ADP-L-glycero-beta-D-manno-heptose from D-glycero-beta-D-manno-heptose 7-phosphate: step 3/4. Its function is as follows. Catalyzes the phosphorylation of D-glycero-D-manno-heptose 7-phosphate at the C-1 position to selectively form D-glycero-beta-D-manno-heptose-1,7-bisphosphate. Catalyzes the ADP transfer from ATP to D-glycero-beta-D-manno-heptose 1-phosphate, yielding ADP-D-glycero-beta-D-manno-heptose. In Helicobacter pylori (strain P12), this protein is Bifunctional protein HldE.